The following is a 30-amino-acid chain: uncharacterized protein (30 aa).

Residues Met-1 to Ser-22 form the signal peptide.

This is an uncharacterized protein from Schizosaccharomyces pombe (strain 972 / ATCC 24843) (Fission yeast).